Consider the following 142-residue polypeptide: Large ribosomal subunit protein uL11 (142 aa).

The protein belongs to the universal ribosomal protein uL11 family. As to quaternary structure, part of the ribosomal stalk of the 50S ribosomal subunit. Interacts with L10 and the large rRNA to form the base of the stalk. L10 forms an elongated spine to which L12 dimers bind in a sequential fashion forming a multimeric L10(L12)X complex. Post-translationally, one or more lysine residues are methylated.

In terms of biological role, forms part of the ribosomal stalk which helps the ribosome interact with GTP-bound translation factors. This Xylella fastidiosa (strain 9a5c) protein is Large ribosomal subunit protein uL11.